Reading from the N-terminus, the 447-residue chain is ATP-dependent protease ATPase subunit HslU (447 aa).

ATP is bound by residues Ile17 and 59–64 (GVGKTE). Residues 136 to 160 (PPARGGFQGEPTAEEKPTEKKESAT) are disordered. Residues 148-159 (AEEKPTEKKESA) are compositionally biased toward basic and acidic residues. Asp260, Glu325, and Arg397 together coordinate ATP.

Belongs to the ClpX chaperone family. HslU subfamily. In terms of assembly, a double ring-shaped homohexamer of HslV is capped on each side by a ring-shaped HslU homohexamer. The assembly of the HslU/HslV complex is dependent on binding of ATP.

The protein resides in the cytoplasm. Its function is as follows. ATPase subunit of a proteasome-like degradation complex; this subunit has chaperone activity. The binding of ATP and its subsequent hydrolysis by HslU are essential for unfolding of protein substrates subsequently hydrolyzed by HslV. HslU recognizes the N-terminal part of its protein substrates and unfolds these before they are guided to HslV for hydrolysis. This Coxiella burnetii (strain Dugway 5J108-111) protein is ATP-dependent protease ATPase subunit HslU.